Reading from the N-terminus, the 255-residue chain is Isoprenyl transferase (255 aa).

Residue Asp-35 is part of the active site. Mg(2+) is bound at residue Asp-35. Substrate contacts are provided by residues 36-39, Trp-40, Arg-48, His-52, and 80-82; these read GNGR and STE. Residue Asn-83 is the Proton acceptor of the active site. Residues Trp-84, Arg-86, Arg-203, and 209 to 211 contribute to the substrate site; that span reads RIS. Glu-222 contacts Mg(2+).

Belongs to the UPP synthase family. Homodimer. Mg(2+) is required as a cofactor.

Functionally, catalyzes the condensation of isopentenyl diphosphate (IPP) with allylic pyrophosphates generating different type of terpenoids. The chain is Isoprenyl transferase from Clostridium tetani (strain Massachusetts / E88).